The following is a 286-amino-acid chain: 4-hydroxybenzoate octaprenyltransferase (286 aa).

7 helical membrane passes run 21-40 (GTLLLMWPCLMALMLAAGGM), 95-115 (ILFVVLGLSAFGLVLLLNGLV), 142-162 (FLGVVWSWSIPMAYAAQTGEV), 167-187 (WWLFAANWFWTVAYDTMYAMV), 211-231 (IIGLFQIAALVCFIAAGWSAE), 235-255 (LYGLGLLTFVGFSTYQQMLIF), and 266-286 (FLNNNWAGLALFVGLGADYLI).

It belongs to the UbiA prenyltransferase family. The cofactor is Mg(2+).

It is found in the cell inner membrane. It catalyses the reaction all-trans-octaprenyl diphosphate + 4-hydroxybenzoate = 4-hydroxy-3-(all-trans-octaprenyl)benzoate + diphosphate. It participates in cofactor biosynthesis; ubiquinone biosynthesis. Its function is as follows. Catalyzes the prenylation of para-hydroxybenzoate (PHB) with an all-trans polyprenyl group. Mediates the second step in the final reaction sequence of ubiquinone-8 (UQ-8) biosynthesis, which is the condensation of the polyisoprenoid side chain with PHB, generating the first membrane-bound Q intermediate 3-octaprenyl-4-hydroxybenzoate. In Shewanella putrefaciens (strain CN-32 / ATCC BAA-453), this protein is 4-hydroxybenzoate octaprenyltransferase.